The primary structure comprises 87 residues: UPF0250 protein YPK_3025 (87 aa).

The protein belongs to the UPF0250 family.

This chain is UPF0250 protein YPK_3025, found in Yersinia pseudotuberculosis serotype O:3 (strain YPIII).